The primary structure comprises 350 residues: Uroporphyrinogen decarboxylase (350 aa).

Residues 28–32 (RQAGR), Asp-78, Tyr-155, Ser-210, and His-325 each bind substrate.

The protein belongs to the uroporphyrinogen decarboxylase family. As to quaternary structure, homodimer.

The protein resides in the cytoplasm. The enzyme catalyses uroporphyrinogen III + 4 H(+) = coproporphyrinogen III + 4 CO2. It functions in the pathway porphyrin-containing compound metabolism; protoporphyrin-IX biosynthesis; coproporphyrinogen-III from 5-aminolevulinate: step 4/4. Catalyzes the decarboxylation of four acetate groups of uroporphyrinogen-III to yield coproporphyrinogen-III. The polypeptide is Uroporphyrinogen decarboxylase (Trichormus variabilis (strain ATCC 29413 / PCC 7937) (Anabaena variabilis)).